We begin with the raw amino-acid sequence, 306 residues long: Protein SULFUR DEFICIENCY-INDUCED 1 (306 aa).

TPR repeat units follow at residues 1-22 (MERS…NLMK), 71-104 (DSAL…CSKN), 107-140 (DSLD…IYQG), 167-200 (SRLL…EPDA), and 202-233 (KSCN…RVLG). Residues 72–139 (SALKDMAVVM…LKRKLRQIYQ (68 aa)) are a coiled coil. Residues 238 to 260 (RTRQRAEELLSELESSLPRMRDA) adopt a coiled-coil conformation. Residues 270-304 (LDDDFVLGLEEMTSTSFKSKRLPIFEQISSFRNTL) form a TPR 6 repeat.

It belongs to the MS5 protein family.

The protein resides in the nucleus. Functionally, involved in the utilization of stored sulfate under sulfur-deficient conditions. The polypeptide is Protein SULFUR DEFICIENCY-INDUCED 1 (Arabidopsis thaliana (Mouse-ear cress)).